We begin with the raw amino-acid sequence, 408 residues long: LL-diaminopimelate aminotransferase (408 aa).

Residues Tyr-15 and Gly-42 each contribute to the substrate site. Pyridoxal 5'-phosphate contacts are provided by residues Tyr-72, 108 to 109 (SK), Tyr-132, Asn-187, Tyr-218, and 246 to 248 (SFS). Residues Lys-109, Tyr-132, and Asn-187 each contribute to the substrate site. Residue Lys-249 is modified to N6-(pyridoxal phosphate)lysine. Pyridoxal 5'-phosphate is bound by residues Arg-257 and Asn-292. Substrate contacts are provided by Asn-292 and Arg-388.

Belongs to the class-I pyridoxal-phosphate-dependent aminotransferase family. LL-diaminopimelate aminotransferase subfamily. Homodimer. Requires pyridoxal 5'-phosphate as cofactor.

It catalyses the reaction (2S,6S)-2,6-diaminopimelate + 2-oxoglutarate = (S)-2,3,4,5-tetrahydrodipicolinate + L-glutamate + H2O + H(+). The protein operates within amino-acid biosynthesis; L-lysine biosynthesis via DAP pathway; LL-2,6-diaminopimelate from (S)-tetrahydrodipicolinate (aminotransferase route): step 1/1. Functionally, involved in the synthesis of meso-diaminopimelate (m-DAP or DL-DAP), required for both lysine and peptidoglycan biosynthesis. Catalyzes the direct conversion of tetrahydrodipicolinate to LL-diaminopimelate. The protein is LL-diaminopimelate aminotransferase of Leptospira borgpetersenii serovar Hardjo-bovis (strain L550).